We begin with the raw amino-acid sequence, 461 residues long: Putative aldehyde dehydrogenase FUS7 (461 aa).

An NAD(+)-binding site is contributed by 220–225 (GSTTTG). Residues Glu242 and Cys276 contribute to the active site.

Belongs to the aldehyde dehydrogenase family.

The catalysed reaction is an aldehyde + NAD(+) + H2O = a carboxylate + NADH + 2 H(+). Its function is as follows. Putative aldehyde dehydrogenase; part of the gene cluster that mediates the biosynthesis of the mycotoxin fusarin C. Within the cluster, FUS1, FUS2, FUS8 and FUS9 are sufficient for fusarin production. The other FUS cluster members are not essential for fusarin C biosynthesis. This chain is Putative aldehyde dehydrogenase FUS7, found in Gibberella fujikuroi (strain CBS 195.34 / IMI 58289 / NRRL A-6831) (Bakanae and foot rot disease fungus).